Reading from the N-terminus, the 245-residue chain is 1-(5-phosphoribosyl)-5-[(5-phosphoribosylamino)methylideneamino] imidazole-4-carboxamide isomerase (245 aa).

The Proton acceptor role is filled by D11. Residue D132 is the Proton donor of the active site.

The protein belongs to the HisA/HisF family.

It is found in the cytoplasm. The enzyme catalyses 1-(5-phospho-beta-D-ribosyl)-5-[(5-phospho-beta-D-ribosylamino)methylideneamino]imidazole-4-carboxamide = 5-[(5-phospho-1-deoxy-D-ribulos-1-ylimino)methylamino]-1-(5-phospho-beta-D-ribosyl)imidazole-4-carboxamide. The protein operates within amino-acid biosynthesis; L-histidine biosynthesis; L-histidine from 5-phospho-alpha-D-ribose 1-diphosphate: step 4/9. This Bacillus licheniformis (strain ATCC 14580 / DSM 13 / JCM 2505 / CCUG 7422 / NBRC 12200 / NCIMB 9375 / NCTC 10341 / NRRL NRS-1264 / Gibson 46) protein is 1-(5-phosphoribosyl)-5-[(5-phosphoribosylamino)methylideneamino] imidazole-4-carboxamide isomerase.